The chain runs to 361 residues: Peptide chain release factor 1 (361 aa).

Position 235 is an N5-methylglutamine (Gln235).

This sequence belongs to the prokaryotic/mitochondrial release factor family. Post-translationally, methylated by PrmC. Methylation increases the termination efficiency of RF1.

The protein localises to the cytoplasm. Its function is as follows. Peptide chain release factor 1 directs the termination of translation in response to the peptide chain termination codons UAG and UAA. In Buchnera aphidicola subsp. Schizaphis graminum (strain Sg), this protein is Peptide chain release factor 1.